Reading from the N-terminus, the 314-residue chain is Ribose-phosphate pyrophosphokinase (314 aa).

Residues 37 to 39 (DGE) and 96 to 97 (RQ) each bind ATP. Residues H131 and D170 each coordinate Mg(2+). K194 is a catalytic residue. Residues R196, D220, and 224-228 (DTGGT) each bind D-ribose 5-phosphate.

The protein belongs to the ribose-phosphate pyrophosphokinase family. Class I subfamily. In terms of assembly, homohexamer. Mg(2+) is required as a cofactor.

Its subcellular location is the cytoplasm. The catalysed reaction is D-ribose 5-phosphate + ATP = 5-phospho-alpha-D-ribose 1-diphosphate + AMP + H(+). Its pathway is metabolic intermediate biosynthesis; 5-phospho-alpha-D-ribose 1-diphosphate biosynthesis; 5-phospho-alpha-D-ribose 1-diphosphate from D-ribose 5-phosphate (route I): step 1/1. Functionally, involved in the biosynthesis of the central metabolite phospho-alpha-D-ribosyl-1-pyrophosphate (PRPP) via the transfer of pyrophosphoryl group from ATP to 1-hydroxyl of ribose-5-phosphate (Rib-5-P). This Vibrio vulnificus (strain CMCP6) protein is Ribose-phosphate pyrophosphokinase.